Here is a 1563-residue protein sequence, read N- to C-terminus: Superkiller complex protein 3 (1563 aa).

Ser2 bears the N-acetylserine mark. TPR repeat units lie at residues 6–39, 40–73, 157–196, 272–305, 307–339, 386–419, 420–453, 455–492, 493–527, 564–597, 598–631, 632–665, 633–665, 673–713, 790–824, 826–860, 861–894, 980–1013, 1020–1053, 1055–1084, 1325–1358, and 1399–1432; these read VKTA…EKNN, YNAW…EPEQ, YELW…ADNI, GPGL…SPVC, AGWC…IDNF, PGLL…YPDL, AEAH…DAEV, EYHY…DAHM, GKVF…DDND, KWAW…DPKD, CNCW…NPDS, TYSV…KEDY, YSVF…KEDY, GECH…RADV, VQHL…DSNN, LHWN…EQIN, AAAW…DPSY, ASAF…LHSA, NVAV…ELED, IGFA…CKSE, KWSF…NPDQ, and VPAW…ASQQ.

It belongs to the SKI3 family. In terms of assembly, component of the SKI complex which consists of SKIC2, SKIC3 and SKIC8. Interacts with PAF1.

It localises to the cytoplasm. The protein resides in the nucleus. Functionally, component of the SKI complex, a multiprotein complex that assists the RNA-degrading exosome during the mRNA decay and quality-control pathways. The SKI complex catalyzes mRNA extraction from 80S ribosomal complexes in the 3'-5' direction and channels mRNA to the cytosolic exosome for degradation. SKI-mediated extraction of mRNA from stalled ribosomes allow binding of the Pelota-HBS1L complex and subsequent ribosome disassembly by ABCE1 for ribosome recycling. In the nucleus, the SKI complex associates with transcriptionally active genes in a manner dependent on PAF1 complex (PAF1C). The protein is Superkiller complex protein 3 of Mus musculus (Mouse).